The sequence spans 178 residues: Large ribosomal subunit protein eL20 (178 aa).

Belongs to the eukaryotic ribosomal protein eL20 family.

This Castanea sativa (Sweet chestnut) protein is Large ribosomal subunit protein eL20 (RPL18A).